The following is a 182-amino-acid chain: Troponin I, fast skeletal muscle (182 aa).

Gly-2 carries the post-translational modification N-acetylglycine. The involved in binding TNC stretch occupies residues 2–48; the sequence is GDEEKRNRAITARRQHLKSVMLQIAATELEKEESRREAEKQNYLAEH. Position 12 is a phosphothreonine (Thr-12). Residues 97–117 are involved in binding TNC and actin; it reads NQKLFDLRGKFKRPPLRRVRM. The residue at position 118 (Ser-118) is a Phosphoserine.

Belongs to the troponin I family. In terms of assembly, binds to actin and tropomyosin.

Troponin I is the inhibitory subunit of troponin, the thin filament regulatory complex which confers calcium-sensitivity to striated muscle actomyosin ATPase activity. This is Troponin I, fast skeletal muscle (TNNI2) from Homo sapiens (Human).